An 883-amino-acid polypeptide reads, in one-letter code: Lysine-specific demethylase JMJ29 (883 aa).

Disordered stretches follow at residues 30-62 and 161-204; these read KPFM…SAVK and RTHS…SRKQ. The span at 34–43 shows a compositional bias: low complexity; the sequence is SKGSSPSSSS. Composition is skewed to polar residues over residues 161-172 and 184-204; these read RTHSLSANSPEN and SPAS…SRKQ. Positions 209, 212, 223, 226, 232, 235, 252, 255, 338, 341, 363, and 381 each coordinate Zn(2+). The segment at 209–256 adopts an RING-type; degenerate zinc-finger fold; it reads CHQCLKGERITLLICSECEKTMFCLQCIRKWYPNLSEDDVVEKCPLCR. The B box-type; atypical zinc-finger motif lies at 333–392; it reads DERVYCDHCATSIVDLHRSCPKCSYELCLKCCQEIREGSLSERPEMKFHYVDRGHRYMHG. The region spanning 632–863 is the JmjC domain; the sequence is PRTGILNIAT…ECLRLTEEFR (232 aa). The Fe cation site is built by His-676 and Asp-678. The disordered stretch occupies residues 713–743; the sequence is NKVDKQSTEDCNEKEEEEEEELNMPEISSNE. The segment covering 722–735 has biased composition (acidic residues); the sequence is DCNEKEEEEEEELN. The Nuclear localization signal motif lies at 755 to 762; sequence FRREDVPK. His-831 is a Fe cation binding site.

It belongs to the JARID1 histone demethylase family. Fe(2+) is required as a cofactor. In terms of tissue distribution, expressed in inflorescences, roots, siliques, leaves and stems.

It localises to the nucleus. Functionally, may function as histone H3 lysine demethylase and be involved in regulation of gene expression. In Arabidopsis thaliana (Mouse-ear cress), this protein is Lysine-specific demethylase JMJ29.